The sequence spans 205 residues: MRGNNVNLKTVSGSAVELSEVAFGREFNEALVHQVVTAYLAGGRQGTRAQKSRAEVSGGGKKPFRQKGTGRARAGSIRSPIWVGGGKTFAARPQDWSQKVNRKMYRGAMQCILAELVRQDRLVLVEEFAVAAPKTKELLAKLNDLNAARALIVTDAVDENLYLAARNLPHVDVVDATAIDPVSLIAFDKVVMSVAAAKKIEVELG.

Positions 47-70 are disordered; that stretch reads TRAQKSRAEVSGGGKKPFRQKGTG.

This sequence belongs to the universal ribosomal protein uL4 family. As to quaternary structure, part of the 50S ribosomal subunit.

Functionally, one of the primary rRNA binding proteins, this protein initially binds near the 5'-end of the 23S rRNA. It is important during the early stages of 50S assembly. It makes multiple contacts with different domains of the 23S rRNA in the assembled 50S subunit and ribosome. Forms part of the polypeptide exit tunnel. The protein is Large ribosomal subunit protein uL4 of Acinetobacter baylyi (strain ATCC 33305 / BD413 / ADP1).